A 926-amino-acid polypeptide reads, in one-letter code: Ubiquitin carboxyl-terminal hydrolase 4 (926 aa).

In terms of domain architecture, Rhodanese spans 205 to 328 (SQMEILLIDI…WLKSNYGSQV (124 aa)). Ser-443 carries the post-translational modification Phosphoserine. Residues 562–923 (VGLENLGNSC…NAYVLFYHRV (362 aa)) enclose the USP domain. The active-site Nucleophile is Cys-571. The active-site Proton acceptor is the His-880.

This sequence belongs to the peptidase C19 family. As to quaternary structure, interacts with BRO1, RFU1 and VPS32. Associates with the 26S proteasome.

The protein resides in the cytoplasm. It is found in the late endosome membrane. The enzyme catalyses Thiol-dependent hydrolysis of ester, thioester, amide, peptide and isopeptide bonds formed by the C-terminal Gly of ubiquitin (a 76-residue protein attached to proteins as an intracellular targeting signal).. Its activity is regulated as follows. RFU1 is an inhibitor of deubiquitination activity. Functionally, ubiquitin thioesterase that acts at the late endosome/prevacuolar compartment to recover ubiquitin from ubiquitinated membrane proteins en route to the vacuole. Also removes ubiquitin from soluble proteins targeted to proteasomes. Is essential to maintain a normal level of free ubiquitin. Involved in the ammonium-induced down-regulation of the GAP1 permease and the UME3 destruction in response to oxidative stress. Has a role in the RAD9 checkpoint response to TOP1 poisons. Required for promoting coordination of DNA replication and avoids DNA overreplication. In Saccharomyces cerevisiae (strain YJM789) (Baker's yeast), this protein is Ubiquitin carboxyl-terminal hydrolase 4 (DOA4).